The chain runs to 574 residues: Urease subunit alpha (574 aa).

Positions 131–574 constitute a Urease domain; sequence GAIDSHIHFI…LPMAQRYLLI (444 aa). Positions 136, 138, and 219 each coordinate Ni(2+). Lys219 is modified (N6-carboxylysine). His221 is a substrate binding site. Residues His248 and His274 each coordinate Ni(2+). The active-site Proton donor is the His322. Ni(2+) is bound at residue Asp362.

Belongs to the metallo-dependent hydrolases superfamily. Urease alpha subunit family. Heterotrimer of UreA (gamma), UreB (beta) and UreC (alpha) subunits. Three heterotrimers associate to form the active enzyme. It depends on Ni cation as a cofactor. Carboxylation allows a single lysine to coordinate two nickel ions.

It is found in the cytoplasm. The catalysed reaction is urea + 2 H2O + H(+) = hydrogencarbonate + 2 NH4(+). It functions in the pathway nitrogen metabolism; urea degradation; CO(2) and NH(3) from urea (urease route): step 1/1. This chain is Urease subunit alpha, found in Prochlorococcus marinus (strain MIT 9303).